The primary structure comprises 397 residues: Acetate kinase 2 (397 aa).

Asparagine 10 provides a ligand contact to Mg(2+). An ATP-binding site is contributed by lysine 17. Residue arginine 90 participates in substrate binding. Aspartate 147 (proton donor/acceptor) is an active-site residue. Residues 207–211, 281–283, and 329–333 contribute to the ATP site; these read HLGNG, DAR, and GIGEN. Glutamate 385 is a binding site for Mg(2+).

The protein belongs to the acetokinase family. Homodimer. Requires Mg(2+) as cofactor. Mn(2+) is required as a cofactor.

It localises to the cytoplasm. The catalysed reaction is acetate + ATP = acetyl phosphate + ADP. The protein operates within metabolic intermediate biosynthesis; acetyl-CoA biosynthesis; acetyl-CoA from acetate: step 1/2. In terms of biological role, catalyzes the formation of acetyl phosphate from acetate and ATP. Can also catalyze the reverse reaction. This Vibrio cholerae serotype O1 (strain ATCC 39315 / El Tor Inaba N16961) protein is Acetate kinase 2.